We begin with the raw amino-acid sequence, 440 residues long: Cyclic dipeptide prenyltransferase (440 aa).

Residues 1–33 are disordered; that stretch reads MDGEMTASPPDISACDTSAVDEQTGQSGQSQAP. The segment covering 20 to 32 has biased composition (polar residues); it reads VDEQTGQSGQSQA. Residues threonine 108 and glutamate 116 each contribute to the substrate site. The dimethylallyl diphosphate site is built by arginine 129, lysine 219, and tyrosine 221. Residue phenylalanine 223 coordinates substrate. The dimethylallyl diphosphate site is built by lysine 286, tyrosine 288, tyrosine 366, tyrosine 431, and tyrosine 435.

The protein belongs to the tryptophan dimethylallyltransferase family.

It carries out the reaction harmol + dimethylallyl diphosphate = 6-(3-dimethylallyl)harmol + diphosphate. The catalysed reaction is an N-terminal L-tryptophanyl-L-alpha-aminoacyl-[peptide] + H2O = an N-terminal L-alpha-aminoacyl-[peptide] + L-tryptophan. It catalyses the reaction (R)-benzodiazepinedione + dimethylallyl diphosphate = (2S,3R,11R)-aszonalenin + diphosphate. The enzyme catalyses (S)-benzodiazepinedione + dimethylallyl diphosphate = (2S,3R,11S)-aszonalenin + diphosphate. Functionally, prenyltransferase that catalyzes reverse prenylation at position N-1 of tryptophan-containing cyclic dipeptides. Accepts only dimethylallyl diphosphate (DMAPP) as the prenyl donor but shows broad substrate specificities toward its aromatic substrates. Also shows tryptophan aminopeptidase activity with preference for linear peptides containing a tryptophanyl moiety at the N-terminus. This Aspergillus fumigatus (Neosartorya fumigata) protein is Cyclic dipeptide prenyltransferase.